A 353-amino-acid polypeptide reads, in one-letter code: Phosphate acyltransferase (353 aa).

Belongs to the PlsX family. Homodimer. Probably interacts with PlsY.

Its subcellular location is the cytoplasm. The catalysed reaction is a fatty acyl-[ACP] + phosphate = an acyl phosphate + holo-[ACP]. It functions in the pathway lipid metabolism; phospholipid metabolism. Catalyzes the reversible formation of acyl-phosphate (acyl-PO(4)) from acyl-[acyl-carrier-protein] (acyl-ACP). This enzyme utilizes acyl-ACP as fatty acyl donor, but not acyl-CoA. This is Phosphate acyltransferase from Afipia carboxidovorans (strain ATCC 49405 / DSM 1227 / KCTC 32145 / OM5) (Oligotropha carboxidovorans).